A 169-amino-acid polypeptide reads, in one-letter code: Ribosomal RNA large subunit methyltransferase H (169 aa).

S-adenosyl-L-methionine is bound by residues leucine 85, glycine 117, and 136-141; that span reads LGELTW.

Belongs to the RNA methyltransferase RlmH family. Homodimer.

The protein localises to the cytoplasm. It catalyses the reaction pseudouridine(1915) in 23S rRNA + S-adenosyl-L-methionine = N(3)-methylpseudouridine(1915) in 23S rRNA + S-adenosyl-L-homocysteine + H(+). Functionally, specifically methylates the pseudouridine at position 1915 (m3Psi1915) in 23S rRNA. This is Ribosomal RNA large subunit methyltransferase H from Brucella abortus biovar 1 (strain 9-941).